The chain runs to 359 residues: Protein Wnt-5b (359 aa).

An N-terminal signal peptide occupies residues 1–17 (MPSLLLLFTAALLSSWA). C83 and C94 are oxidised to a cystine. N-linked (GlcNAc...) asparagine glycans are attached at residues N93 and N99. Disulfide bonds link C133-C141, C143-C161, C217-C231, C219-C226, C288-C319, C304-C314, C318-C358, C334-C349, C336-C346, and C341-C342. A lipid anchor (O-palmitoleoyl serine; by PORCN) is attached at S223. N-linked (GlcNAc...) asparagine glycans are attached at residues N291 and N305.

Belongs to the Wnt family. As to quaternary structure, interacts with PORCN. Post-translationally, palmitoleoylation is required for efficient binding to frizzled receptors. Depalmitoleoylation leads to Wnt signaling pathway inhibition.

It is found in the secreted. It localises to the extracellular space. The protein resides in the extracellular matrix. Its function is as follows. Ligand for members of the frizzled family of seven transmembrane receptors. Probable developmental protein. May be a signaling molecule which affects the development of discrete regions of tissues. Is likely to signal over only few cell diameters. This chain is Protein Wnt-5b (WNT5B), found in Pongo abelii (Sumatran orangutan).